A 101-amino-acid chain; its full sequence is Small ribosomal subunit protein uS17 (101 aa).

This sequence belongs to the universal ribosomal protein uS17 family. In terms of assembly, part of the 30S ribosomal subunit.

Functionally, one of the primary rRNA binding proteins, it binds specifically to the 5'-end of 16S ribosomal RNA. The protein is Small ribosomal subunit protein uS17 of Leifsonia xyli subsp. xyli (strain CTCB07).